We begin with the raw amino-acid sequence, 480 residues long: Glutamate--tRNA ligase (480 aa).

The 'HIGH' region motif lies at 12–22; it reads PSPTGAPHLGL. Positions 255–259 match the 'KMSKS' region motif; it reads KLSKR. Position 258 (Lys258) interacts with ATP.

Belongs to the class-I aminoacyl-tRNA synthetase family. Glutamate--tRNA ligase type 1 subfamily. Monomer.

The protein resides in the cytoplasm. The catalysed reaction is tRNA(Glu) + L-glutamate + ATP = L-glutamyl-tRNA(Glu) + AMP + diphosphate. Functionally, catalyzes the attachment of glutamate to tRNA(Glu) in a two-step reaction: glutamate is first activated by ATP to form Glu-AMP and then transferred to the acceptor end of tRNA(Glu). This Tropheryma whipplei (strain TW08/27) (Whipple's bacillus) protein is Glutamate--tRNA ligase.